The following is a 149-amino-acid chain: UPF0260 protein PSPPH_1551 (149 aa).

This sequence belongs to the UPF0260 family.

This chain is UPF0260 protein PSPPH_1551, found in Pseudomonas savastanoi pv. phaseolicola (strain 1448A / Race 6) (Pseudomonas syringae pv. phaseolicola (strain 1448A / Race 6)).